A 153-amino-acid polypeptide reads, in one-letter code: D-aminoacyl-tRNA deacylase (153 aa).

The short motif at 142-143 (GP) is the Gly-cisPro motif, important for rejection of L-amino acids element.

This sequence belongs to the DTD family. Homodimer.

It localises to the cytoplasm. It catalyses the reaction glycyl-tRNA(Ala) + H2O = tRNA(Ala) + glycine + H(+). The catalysed reaction is a D-aminoacyl-tRNA + H2O = a tRNA + a D-alpha-amino acid + H(+). In terms of biological role, an aminoacyl-tRNA editing enzyme that deacylates mischarged D-aminoacyl-tRNAs. Also deacylates mischarged glycyl-tRNA(Ala), protecting cells against glycine mischarging by AlaRS. Acts via tRNA-based rather than protein-based catalysis; rejects L-amino acids rather than detecting D-amino acids in the active site. By recycling D-aminoacyl-tRNA to D-amino acids and free tRNA molecules, this enzyme counteracts the toxicity associated with the formation of D-aminoacyl-tRNA entities in vivo and helps enforce protein L-homochirality. This chain is D-aminoacyl-tRNA deacylase, found in Acidovorax ebreus (strain TPSY) (Diaphorobacter sp. (strain TPSY)).